A 208-amino-acid chain; its full sequence is Small ribosomal subunit protein uS4 (208 aa).

In terms of domain architecture, S4 RNA-binding spans 98 to 161 (QRLDNVVYRM…KNNPQIVRAI (64 aa)).

This sequence belongs to the universal ribosomal protein uS4 family. Part of the 30S ribosomal subunit. Contacts protein S5. The interaction surface between S4 and S5 is involved in control of translational fidelity.

Its function is as follows. One of the primary rRNA binding proteins, it binds directly to 16S rRNA where it nucleates assembly of the body of the 30S subunit. Functionally, with S5 and S12 plays an important role in translational accuracy. The polypeptide is Small ribosomal subunit protein uS4 (Campylobacter concisus (strain 13826)).